We begin with the raw amino-acid sequence, 494 residues long: Cytochrome P450 2A6 (494 aa).

Substrate-binding residues include Phe-107 and Asn-297. Residue Cys-439 participates in heme binding.

It belongs to the cytochrome P450 family. The cofactor is heme. As to expression, liver.

The protein localises to the endoplasmic reticulum membrane. It localises to the microsome membrane. The enzyme catalyses 1,4-cineole + reduced [NADPH--hemoprotein reductase] + O2 = 2-exo-hydroxy-1,4-cineole + oxidized [NADPH--hemoprotein reductase] + H2O + H(+). Its function is as follows. Exhibits a high coumarin 7-hydroxylase activity. Can act in the hydroxylation of the anti-cancer drugs cyclophosphamide and ifosphamide. Competent in the metabolic activation of aflatoxin B1. Constitutes the major nicotine C-oxidase. Acts as a 1,4-cineole 2-exo-monooxygenase. Possesses low phenacetin O-deethylation activity. In Homo sapiens (Human), this protein is Cytochrome P450 2A6 (CYP2A6).